Here is a 120-residue protein sequence, read N- to C-terminus: Small ribosomal subunit protein uS13 (120 aa).

Positions 97–120 are disordered; sequence PVRGQRTKTNARTRKGKKKTVGAK.

The protein belongs to the universal ribosomal protein uS13 family. In terms of assembly, part of the 30S ribosomal subunit. Forms a loose heterodimer with protein S19. Forms two bridges to the 50S subunit in the 70S ribosome.

Functionally, located at the top of the head of the 30S subunit, it contacts several helices of the 16S rRNA. In the 70S ribosome it contacts the 23S rRNA (bridge B1a) and protein L5 of the 50S subunit (bridge B1b), connecting the 2 subunits; these bridges are implicated in subunit movement. Contacts the tRNAs in the A and P-sites. This chain is Small ribosomal subunit protein uS13, found in Nitratiruptor sp. (strain SB155-2).